Here is a 206-residue protein sequence, read N- to C-terminus: Guanylate kinase (206 aa).

The Guanylate kinase-like domain maps to Gly-6–Lys-184. Gly-13–Gly-20 lines the ATP pocket.

The protein belongs to the guanylate kinase family.

The protein resides in the cytoplasm. The enzyme catalyses GMP + ATP = GDP + ADP. Functionally, essential for recycling GMP and indirectly, cGMP. The chain is Guanylate kinase from Oceanobacillus iheyensis (strain DSM 14371 / CIP 107618 / JCM 11309 / KCTC 3954 / HTE831).